A 199-amino-acid chain; its full sequence is Cytochrome c oxidase subunit 2 (199 aa).

Residues 1–13 form a helical membrane-spanning segment; it reads AICSLVLYLLTLM. The Mitochondrial matrix portion of the chain corresponds to 14–26; sequence LMEKLSSNTVDAQ. A helical transmembrane segment spans residues 27-54; that stretch reads EVELIWTILPAIVLILLALPSLQILYMM. Residues 55–199 lie on the Mitochondrial intermembrane side of the membrane; it reads DEIDEPDLTL…SSLLSISSSL (145 aa). Cu cation contacts are provided by histidine 128, cysteine 163, glutamate 165, cysteine 167, histidine 171, and methionine 174. Glutamate 165 serves as a coordination point for Mg(2+).

Belongs to the cytochrome c oxidase subunit 2 family. Component of the cytochrome c oxidase (complex IV, CIV), a multisubunit enzyme composed of 14 subunits. The complex is composed of a catalytic core of 3 subunits MT-CO1, MT-CO2 and MT-CO3, encoded in the mitochondrial DNA, and 11 supernumerary subunits COX4I, COX5A, COX5B, COX6A, COX6B, COX6C, COX7A, COX7B, COX7C, COX8 and NDUFA4, which are encoded in the nuclear genome. The complex exists as a monomer or a dimer and forms supercomplexes (SCs) in the inner mitochondrial membrane with NADH-ubiquinone oxidoreductase (complex I, CI) and ubiquinol-cytochrome c oxidoreductase (cytochrome b-c1 complex, complex III, CIII), resulting in different assemblies (supercomplex SCI(1)III(2)IV(1) and megacomplex MCI(2)III(2)IV(2)). Found in a complex with TMEM177, COA6, COX18, COX20, SCO1 and SCO2. Interacts with TMEM177 in a COX20-dependent manner. Interacts with COX20. Interacts with COX16. The cofactor is Cu cation.

Its subcellular location is the mitochondrion inner membrane. The enzyme catalyses 4 Fe(II)-[cytochrome c] + O2 + 8 H(+)(in) = 4 Fe(III)-[cytochrome c] + 2 H2O + 4 H(+)(out). Component of the cytochrome c oxidase, the last enzyme in the mitochondrial electron transport chain which drives oxidative phosphorylation. The respiratory chain contains 3 multisubunit complexes succinate dehydrogenase (complex II, CII), ubiquinol-cytochrome c oxidoreductase (cytochrome b-c1 complex, complex III, CIII) and cytochrome c oxidase (complex IV, CIV), that cooperate to transfer electrons derived from NADH and succinate to molecular oxygen, creating an electrochemical gradient over the inner membrane that drives transmembrane transport and the ATP synthase. Cytochrome c oxidase is the component of the respiratory chain that catalyzes the reduction of oxygen to water. Electrons originating from reduced cytochrome c in the intermembrane space (IMS) are transferred via the dinuclear copper A center (CU(A)) of subunit 2 and heme A of subunit 1 to the active site in subunit 1, a binuclear center (BNC) formed by heme A3 and copper B (CU(B)). The BNC reduces molecular oxygen to 2 water molecules using 4 electrons from cytochrome c in the IMS and 4 protons from the mitochondrial matrix. In Casuarius bennetti (Dwarf cassowary), this protein is Cytochrome c oxidase subunit 2 (MT-CO2).